The chain runs to 385 residues: 8-amino-7-oxononanoate synthase (385 aa).

Residue R21 participates in substrate binding. Pyridoxal 5'-phosphate is bound at residue 108-109; that stretch reads GF. H133 provides a ligand contact to substrate. S179, H207, and T233 together coordinate pyridoxal 5'-phosphate. Residue K236 is modified to N6-(pyridoxal phosphate)lysine. T352 contacts substrate.

This sequence belongs to the class-II pyridoxal-phosphate-dependent aminotransferase family. BioF subfamily. As to quaternary structure, homodimer. The cofactor is pyridoxal 5'-phosphate.

The enzyme catalyses 6-carboxyhexanoyl-[ACP] + L-alanine + H(+) = (8S)-8-amino-7-oxononanoate + holo-[ACP] + CO2. It functions in the pathway cofactor biosynthesis; biotin biosynthesis. Its function is as follows. Catalyzes the decarboxylative condensation of pimeloyl-[acyl-carrier protein] and L-alanine to produce 8-amino-7-oxononanoate (AON), [acyl-carrier protein], and carbon dioxide. This chain is 8-amino-7-oxononanoate synthase, found in Salmonella agona (strain SL483).